Consider the following 415-residue polypeptide: MYEVRDINLWKEGERKIQWAKQHMPVLNLIRERFKEEKPFKGITIGMALHLEAKTAVLAETLMEGGAEIAITGCNPLSTQDDVAAACAKKGMHVYAWRGETVEEYYENLNKVLDHKPDIVIDDGCDLIFLLHTKRTELLDNIMGGCEETTTGIIRLKAMEKEGALKFPVMDVNDAYTKHLFDNRYGTGQSALDGILRATNLLIAGKTVVVAGYGWCGRGVAMRAKGLGAEVVVTEVNPIRALEARMDGFRVMKMEKAAEIGDIFITTTGCKDVIRKEHILKMRNGAILANAGHFDNEINKKHLEELAKSIKEVRNCVTEYDLGNKKIYLLGEGRLVNLACADGHPCEVMDMSFANQALAAEYILKNHEKLEPRVYNIPYEQDLMIASLKLKAMGIEIDELTKEQKKYLEDWREGT.

2 residues coordinate substrate: Asp123 and Glu148. 149 to 151 (TTT) is an NAD(+) binding site. Substrate is bound by residues Lys178 and Asp182. Residues Asn183, 212–217 (GYGWCG), Glu235, 291–293 (AGH), and Asn337 contribute to the NAD(+) site.

This sequence belongs to the adenosylhomocysteinase family. As to quaternary structure, exists both as a homotetramer and a homodimer, in a 4:1 ratio. The cofactor is NAD(+).

Its subcellular location is the cytoplasm. It catalyses the reaction S-inosyl-L-homocysteine + H2O = L-homocysteine + inosine. Its pathway is amino-acid biosynthesis; S-adenosyl-L-methionine biosynthesis. Functionally, catalyzes the hydrolysis of S-inosyl-L-homocysteine (SIH) to L-homocysteine (Hcy) and inosine. Likely functions in a S-adenosyl-L-methionine (SAM) recycling pathway from S-adenosyl-L-homocysteine (SAH) produced from SAM-dependent methylation reactions. Can also catalyze the reverse reaction in vitro, i.e. the synthesis of SIH from Hcy and inosine. Is specific for SIH and inosine as it is unable to either hydrolyze SAH or synthesize SAH from adenosine and Hcy. In Methanocaldococcus jannaschii (strain ATCC 43067 / DSM 2661 / JAL-1 / JCM 10045 / NBRC 100440) (Methanococcus jannaschii), this protein is S-inosyl-L-homocysteine hydrolase.